Reading from the N-terminus, the 206-residue chain is Urease accessory protein UreG (206 aa).

GTP is bound at residue 14–21 (GPVGSGKT).

The protein belongs to the SIMIBI class G3E GTPase family. UreG subfamily. In terms of assembly, homodimer. UreD, UreF and UreG form a complex that acts as a GTP-hydrolysis-dependent molecular chaperone, activating the urease apoprotein by helping to assemble the nickel containing metallocenter of UreC. The UreE protein probably delivers the nickel.

The protein resides in the cytoplasm. Functionally, facilitates the functional incorporation of the urease nickel metallocenter. This process requires GTP hydrolysis, probably effectuated by UreG. The protein is Urease accessory protein UreG of Brucella anthropi (strain ATCC 49188 / DSM 6882 / CCUG 24695 / JCM 21032 / LMG 3331 / NBRC 15819 / NCTC 12168 / Alc 37) (Ochrobactrum anthropi).